We begin with the raw amino-acid sequence, 280 residues long: MTERERGQGLPAEFFAVGTASFVELLSRTAPQLLPVNRVRDGSHPMPDIPHGTTIVAVRYPEGVMLAGDRRATSGNLIAQKDLEKVHRADEHSAVAMAGTVGLALEMIRLLQVELEHYEKLQSAKLSLPGKARRLGAVIRANLAHAMQGLAVVPVFAGYDLDAGVGRIYNYDITGMPQESRDFHAEGSGSPFARGALKKLYRPDLTEAEAAAVCVQALYDAAEDDAATAGPDLARRIFPTIATVTADGYRRLPEQEVAELTESVVGARRQRPDGPVAPLR.

A propeptide spans 1–52 (MTERERGQGLPAEFFAVGTASFVELLSRTAPQLLPVNRVRDGSHPMPDIPHG) (removed in mature form; by autocatalysis). Threonine 53 functions as the Nucleophile in the catalytic mechanism.

It belongs to the peptidase T1B family. The 20S proteasome core is composed of 14 alpha and 14 beta subunits that assemble into four stacked heptameric rings, resulting in a barrel-shaped structure. The two inner rings, each composed of seven catalytic beta subunits, are sandwiched by two outer rings, each composed of seven alpha subunits. The catalytic chamber with the active sites is on the inside of the barrel. Has a gated structure, the ends of the cylinder being occluded by the N-termini of the alpha-subunits. Is capped by the proteasome-associated ATPase, ARC.

The protein localises to the cytoplasm. The catalysed reaction is Cleavage of peptide bonds with very broad specificity.. Its pathway is protein degradation; proteasomal Pup-dependent pathway. Its activity is regulated as follows. The formation of the proteasomal ATPase ARC-20S proteasome complex, likely via the docking of the C-termini of ARC into the intersubunit pockets in the alpha-rings, may trigger opening of the gate for substrate entry. Interconversion between the open-gate and close-gate conformations leads to a dynamic regulation of the 20S proteasome proteolysis activity. In terms of biological role, component of the proteasome core, a large protease complex with broad specificity involved in protein degradation. The sequence is that of Proteasome subunit beta 2 from Thermomonospora curvata (strain ATCC 19995 / DSM 43183 / JCM 3096 / KCTC 9072 / NBRC 15933 / NCIMB 10081 / Henssen B9).